The chain runs to 139 residues: MAIERTLSILKPDAVKNNITGSINSYIEKSGLKIIAQRKMLLTKKQAELFYEIHKDRPFFGELVEFMTSGSVIVQVLIGENAVSKYRQIMGATDPKQADKGTIRGDFANDISENRVHGSDSLENAHREIAFFFAECELV.

K11, F59, R87, T93, R104, and N114 together coordinate ATP. Residue H117 is the Pros-phosphohistidine intermediate of the active site.

The protein belongs to the NDK family. In terms of assembly, homotetramer. It depends on Mg(2+) as a cofactor.

It is found in the cytoplasm. It carries out the reaction a 2'-deoxyribonucleoside 5'-diphosphate + ATP = a 2'-deoxyribonucleoside 5'-triphosphate + ADP. The enzyme catalyses a ribonucleoside 5'-diphosphate + ATP = a ribonucleoside 5'-triphosphate + ADP. Major role in the synthesis of nucleoside triphosphates other than ATP. The ATP gamma phosphate is transferred to the NDP beta phosphate via a ping-pong mechanism, using a phosphorylated active-site intermediate. This chain is Nucleoside diphosphate kinase, found in Wolbachia pipientis subsp. Culex pipiens (strain wPip).